Consider the following 96-residue polypeptide: Protein RnfH (96 aa).

It belongs to the UPF0125 (RnfH) family.

The sequence is that of Protein RnfH from Salmonella agona (strain SL483).